The primary structure comprises 254 residues: Putative epimerase LsrE (254 aa).

The chain crosses the membrane as a helical span at residues 14–34 (VALLASYPLSVGILAGQWIAL). Residues histidine 50, aspartate 52, and histidine 81 each coordinate a divalent metal cation. Aspartate 52 functions as the Proton acceptor in the catalytic mechanism. Substrate contacts are provided by residues histidine 81, 166 to 169 (GYGS), 199 to 201 (DGS), and 221 to 222 (GS). A divalent metal cation is bound at residue aspartate 199. Aspartate 199 (proton donor) is an active-site residue.

It belongs to the ribulose-phosphate 3-epimerase family. The cofactor is a divalent metal cation.

Its subcellular location is the cell membrane. The protein is Putative epimerase LsrE (lsrE) of Salmonella choleraesuis (strain SC-B67).